The following is a 415-amino-acid chain: G-protein coupled receptor daf-38 (415 aa).

Over residues 1-19 (MLLPSNLTTSTLMTSSSES) the composition is skewed to low complexity. A disordered region spans residues 1-25 (MLLPSNLTTSTLMTSSSESYDADNP). The Extracellular portion of the chain corresponds to 1–35 (MLLPSNLTTSTLMTSSSESYDADNPGLPPEPILSD). Residues 36 to 56 (YVEMFTLVLNFIVGAPLNLAA) traverse the membrane as a helical segment. Topologically, residues 57-75 (YTQLSERPTSTRLDLLKRS) are cytoplasmic. The chain crosses the membrane as a helical span at residues 76-96 (LNYSDLLVLFIYVPSRACWLL). The Extracellular portion of the chain corresponds to 97–108 (TYDWRGGDALCK). A disulfide bridge connects residues C107 and C187. A helical membrane pass occupies residues 109-129 (IVKMFHTFAFQSSSNVIVCIA). Topologically, residues 130 to 152 (VDRLLSVLSPSHHSPNKALKRTK) are cytoplasmic. Residues 153 to 173 (MMLIVAWIVALVISCPQLFIW) form a helical membrane-spanning segment. The Extracellular portion of the chain corresponds to 174–222 (KAYLALPEYNWSQCLQIWEIARMEKFNKPQVVPEFDAEFWYSILHISLV). A helical transmembrane segment spans residues 223 to 243 (FWIPCIIIMLSYIIVISWVWI). Topologically, residues 244-345 (NSRPSIRHTS…NLNRSRALRV (102 aa)) are cytoplasmic. The chain crosses the membrane as a helical span at residues 346–366 (SLLLVVAYIICWLPYNLISLI). At 367–382 (QFLDRDFFSSYLKHVH) the chain is on the extracellular side. The helical transmembrane segment at 383 to 403 (FCQQLIIFNSVVNPWLYGFFG) threads the bilayer. The Cytoplasmic portion of the chain corresponds to 404–415 (PRRPSTTGAGRH).

The protein belongs to the G-protein coupled receptor 1 family. Heterodimer; with daf-37. As to expression, expressed in the ASI and ASK chemosensory neurons and in the IL-2 interneurons, but weakly expressed in other head neurons in hermaphrodites.

The protein resides in the cell membrane. Its function is as follows. G-protein coupled receptor (GPCR) that forms a heterodimer with daf-37 to control dauer formation and behavior. Required for the response to dauer inducing pheromones such as the ascarosides ascr#2, ascr#3 and ascr#5. The chain is G-protein coupled receptor daf-38 from Caenorhabditis elegans.